A 542-amino-acid chain; its full sequence is MDGRCLHNIMYTGTYDEIMRAINIYEHRNYSSFRNLPLHYAIYSRRKDIVETLLKSGYDPNSVDITDNNCLQLLSMPFDITMLPVDEEVQDYAISFYLSKNMKHTSMLIPITKEALRGNRYPSEPYFSSMCRKFKDNELCIMDLLLRYGALPNSRKDGLLPLYHAAAAGNTEMVELLLSYGAKTNLHTRYEDSIFMCAIKSNNVKTAKIISDLYNYKNDINNILKTIQLYNADMLLFLIEIGLDINTKDKKGKTALHYACNSINCIETVKEIMKYGADINVKDREGLTPLHSACKYGDLKLSKLLIEYGADVKVKTTSTVLNLAVESGNVELVKFLIEKNPEFITSDYLSLSLAIRCKDINIVLLLLDAGMDVNSSKCISTPLHLGVILGNSNIVKLLLDHGANINAIDKYGETPLEAANKRINIDYAELYKSNRFIIKYLVFLSRYDYKIKNNIGFIKNMYIIDKDETLSCFRNMCETELDKISSIKIGQYSLYSLLASDNDVKEYICKNRQEITQKIIDNLKDIIIYRSFIEKYISRINI.

8 ANK repeats span residues 33-62 (FRNL…DPNS), 157-186 (DGLL…KTNL), 218-247 (NDIN…DINT), 251-281 (KGKT…DINV), 285-314 (EGLT…DVKV), 316-345 (TTST…EFIT), 347-375 (DYLS…DVNS), and 378-407 (CIST…NINA).

The chain is Putative ankyrin repeat protein FPV115 from Fowlpox virus (strain NVSL) (FPV).